The sequence spans 479 residues: Proline--tRNA ligase (479 aa).

This sequence belongs to the class-II aminoacyl-tRNA synthetase family. ProS type 3 subfamily. As to quaternary structure, homodimer.

The protein resides in the cytoplasm. The catalysed reaction is tRNA(Pro) + L-proline + ATP = L-prolyl-tRNA(Pro) + AMP + diphosphate. Functionally, catalyzes the attachment of proline to tRNA(Pro) in a two-step reaction: proline is first activated by ATP to form Pro-AMP and then transferred to the acceptor end of tRNA(Pro). The polypeptide is Proline--tRNA ligase (Agathobacter rectalis (strain ATCC 33656 / DSM 3377 / JCM 17463 / KCTC 5835 / VPI 0990) (Eubacterium rectale)).